A 91-amino-acid chain; its full sequence is PqqA binding protein (91 aa).

The protein belongs to the PqqD family. Monomer. Interacts with PqqE.

It functions in the pathway cofactor biosynthesis; pyrroloquinoline quinone biosynthesis. Functionally, functions as a PqqA binding protein and presents PqqA to PqqE, in the pyrroloquinoline quinone (PQQ) biosynthetic pathway. This chain is PqqA binding protein, found in Pseudomonas fluorescens (strain Pf0-1).